The chain runs to 272 residues: Putative B3 domain-containing protein Os02g0455900 (272 aa).

The segment at residues 30-134 (GKVLMPSDVS…RFFICCRCTC (105 aa)) is a DNA-binding region (TF-B3). The segment at 189 to 227 (TASLGCAAAQPPQVPPTPTPRRRRRSMMVHPEPPEHTTD) is disordered.

Its subcellular location is the nucleus. The sequence is that of Putative B3 domain-containing protein Os02g0455900 from Oryza sativa subsp. japonica (Rice).